Reading from the N-terminus, the 280-residue chain is Pantothenate synthetase (280 aa).

An ATP-binding site is contributed by 31 to 38; it reads MGNLHAGH. The active-site Proton donor is the His38. Gln62 contacts (R)-pantoate. Gln62 serves as a coordination point for beta-alanine. Position 150–153 (150–153) interacts with ATP; sequence GKKD. Gln156 contributes to the (R)-pantoate binding site. ATP-binding positions include Val179 and 187 to 190; that span reads MSSR.

The protein belongs to the pantothenate synthetase family. As to quaternary structure, homodimer.

Its subcellular location is the cytoplasm. It catalyses the reaction (R)-pantoate + beta-alanine + ATP = (R)-pantothenate + AMP + diphosphate + H(+). The protein operates within cofactor biosynthesis; (R)-pantothenate biosynthesis; (R)-pantothenate from (R)-pantoate and beta-alanine: step 1/1. Catalyzes the condensation of pantoate with beta-alanine in an ATP-dependent reaction via a pantoyl-adenylate intermediate. The polypeptide is Pantothenate synthetase (Xanthomonas euvesicatoria pv. vesicatoria (strain 85-10) (Xanthomonas campestris pv. vesicatoria)).